We begin with the raw amino-acid sequence, 68 residues long: MNKIYFVIVFVACFCLFAEAQLTFTSSWGGGKRSGVAPMSCKNEEAVATIFKLIQNEAERFIICQQKS.

Residues 1–20 form the signal peptide; sequence MNKIYFVIVFVACFCLFAEA. Glutamine 21 is subject to Pyrrolidone carboxylic acid. A Glycine amide modification is found at glycine 30. Residues 34–68 constitute a propeptide that is removed on maturation; that stretch reads SGVAPMSCKNEEAVATIFKLIQNEAERFIICQQKS.

In terms of tissue distribution, expressed in antennal lobe (AL), corpora cardiaca (CC), corpora allata (CA) and gnathal ganglion (GNG) (at protein level). Expression in CC and CA detected in all animals, expression in GNG in some animals and in AL in few animals (at protein level).

It is found in the secreted. Functionally, this hormone, released from cells in the corpora cardiaca, causes release of diglycerides from the fat body and stimulation of muscles to use these diglycerides as an energy source during energy-demanding processes. In Agrotis ipsilon (Black cutworm moth), this protein is Adipokinetic prohormone type 1.